The following is a 759-amino-acid chain: MEAVIEKECSALGGLFQTIISDMKGSYPVWEDFINKAGKLQSQLRTTVVAAAAFLDAFQKVADMATNTRGGTREIGSALTRMCMRHRSIEAKLRQFSSALIDCLINPLQEQMEEWKKVANQLDKDHAKEYKKARQEIKNKSSDTLKLQKKAKKVDAQGRGDIQPQLDSALQDVNDKYLLLEETEKQAVRKALIEERGRFCTFISMLRPVIEEEISMLGEITHLQTISEDLKSLTMDPHKLPSSSEQVILDLKGSDYSWSYQTPPSSPSTTMSRKSSVCSSLNSVNSSDSRSSGSHSHSPSSHYRYRSSNLAQQAPVRLSSVSSHDSGFISQDAFQSKSPSPMPPEAANQLSNGFSHCSLSSESHAGPVGAGPFPHCLPASRLLPRVTSVHLPDYAHYYTIGPGMFPSSQIPSWKDWAKPGPYDQPLVNTLQRRKEKREPDSNGGGPTTTGGPPAGAEEAQRPRSMTVSAATRPGEEMAACEELTLALSRGLQLDVQRSSRDSLQCSSGYSTQTTTPCCSEDTIPSQVSDYDYFSVSGDQEAEQQEFDKSSTIPRNSDISQSYRRMFQAKRPASTAGLPTTLGPAMVTPGVATIRRTPSTKPSVRRGTIGAGPIPIKTPVIPVKTPTVPDLPGVLPSPPDGPEERGEHSPESPSAGEGPQGVSNIPSSLWSGQAPVNPPLPGPKPSIPEEHRQAIPESEAEDQERDPPSATVSPGPIPESDPADLSPRESPQGEDMLNAIRRGVKLKKTTTNDRSAPRFS.

The IMD domain maps to methionine 1–serine 254. Residues leucine 108 to glutamine 157 are a coiled coil. Positions serine 259 to asparagine 309 are disordered. Position 262 is a phosphothreonine (threonine 262). Phosphoserine is present on residues serine 265, serine 266, serine 275, and serine 326. The segment at glutamine 331 to phenylalanine 354 is disordered. Threonine 429 bears the Phosphothreonine mark. 2 disordered regions span residues glutamine 431–arginine 472 and lysine 569–serine 759. Threonine 607 carries the phosphothreonine modification. Low complexity predominate over residues proline 612–valine 627. Phosphoserine occurs at positions 648 and 651. Residues glycine 660 to serine 670 are compositionally biased toward polar residues. Residues valine 675–serine 685 show a composition bias toward pro residues. A WH2 domain is found at glutamine 731–threonine 748.

The protein belongs to the MTSS family. As to quaternary structure, binds to actin. In terms of tissue distribution, strongly expressed in the developing neurons and skeletal and cardiac muscles in embryos. Strongly expressed also in liver, outer layers of the kidney, and in the Purkinje cells of the brain.

It is found in the cytoplasm. The protein resides in the cytoskeleton. Inhibits the nucleation of actin filaments in vitro. The polypeptide is Protein MTSS 1 (Mus musculus (Mouse)).